Consider the following 874-residue polypeptide: MKKKLSKKYSFKEVEANKLLFWQENNLFKAQINSTKKPFTIVLPPPNVTGHLHIGHAYDFTLSDILMRYKKLKGYDSFIIPGTDHAGIATQTKFEKNLKVNAQTNRFNLGRELFLEKLKIWKDEQINYIHKQWNALGLGLDYSNYLFTLDPIVVQTVREVFVKMFNEHIIYRDKKLVNWDIQLKTAISNIEVIHKEVEQKLYYIKYLSQDQKDFVVVATSRPETMFGDKYLVINPKDKRYFHLHNKIFINPINNIEMTVILDDYIDIEFGTGVMKCTPAHDFNDYELAKKHNLEIINIMNADGTLNEKCGEFKGLDRLEARSLIIDKLQKNNHLLKVESYRTSVGFSERTNEIVEPYLSHQWFIKMDSLIKDTIKMQDDCNNKVDFYPNRFNKTLLTWLKNTEDWCISRQLWWGHQIPVWYHKKTNQIYCDTIPPKDLENWIQDEDVLDTWFSSGMWPLLTTKWNYNSHFFDRYFPTSLIVTGMDILFFWVSRMMNFSQYLVEKKPFKDVLIHGLIRDSQGRKMSKSLGNGIDPFDIIDKYGLDAMRLFFASCTTIGEDLNFSTERLGANWNYLNKIWNIAKYIENLDEINDNLNFEDVDKFCDVNKWILTELSKLTLEINKNMDKYNLVVATKYLYDFIWNTFASYYLEYTKVLLQDLTLKNETIKTIRYVFNKILIMLQPFAPNISEEIWLCLNQTNNSILLQEYPIINFEFETIIIDKIAKIILEIRKLRLEENINNRINLCFELISPNDAFYKSKIKLVNLLLILVNAEINEIKKTSSNNYTYELVIDDFILKTSYEKPIDYVFQMKKASEQLNYLENEIQRATNLLNNSGFINKAPAQLIIKEKNKLINLKKEHANLLKTLTDLKQKVK.

A 'HIGH' region motif is present at residues 46–56 (PNVTGHLHIGH). Residues 523 to 527 (KMSKS) carry the 'KMSKS' region motif. Residue Lys526 coordinates ATP. Positions 805–874 (DYVFQMKKAS…TLTDLKQKVK (70 aa)) form a coiled coil.

The protein belongs to the class-I aminoacyl-tRNA synthetase family. ValS type 1 subfamily. As to quaternary structure, monomer.

It localises to the cytoplasm. It catalyses the reaction tRNA(Val) + L-valine + ATP = L-valyl-tRNA(Val) + AMP + diphosphate. In terms of biological role, catalyzes the attachment of valine to tRNA(Val). As ValRS can inadvertently accommodate and process structurally similar amino acids such as threonine, to avoid such errors, it has a 'posttransfer' editing activity that hydrolyzes mischarged Thr-tRNA(Val) in a tRNA-dependent manner. In Ureaplasma parvum serovar 3 (strain ATCC 700970), this protein is Valine--tRNA ligase.